Consider the following 202-residue polypeptide: Polyamine-modulated factor 1 (202 aa).

Basic and acidic residues predominate over residues 1–15 (MAEVSRDSEAAERGP). A disordered region spans residues 1 to 26 (MAEVSRDSEAAERGPEGSSPEAVPGD). The stretch at 153-194 (EAKNQELADAVLAGRRQVEELQQQVRALQQTWQALHREQREL) forms a coiled coil.

Component of the MIS12 complex composed of MIS12, DSN1, NSL1 and PMF1. Interacts with COPS7A. Interacts via its coiled-coil domain with the leucine-zipper domain of NFE2L2. The interaction with NFE2L2 is required for the transcriptional regulation of SSAT.

The protein localises to the nucleus. It is found in the chromosome. The protein resides in the centromere. Its subcellular location is the kinetochore. In terms of biological role, part of the MIS12 complex which is required for normal chromosome alignment and segregation and for kinetochore formation during mitosis. May act as a cotranscription partner of NFE2L2 involved in regulation of polyamine-induced transcription of SSAT. This is Polyamine-modulated factor 1 from Mus musculus (Mouse).